Consider the following 461-residue polypeptide: ATP synthase subunit beta 2 (461 aa).

Position 151–158 (151–158 (GGAGVGKT)) interacts with ATP.

This sequence belongs to the ATPase alpha/beta chains family. In terms of assembly, F-type ATPases have 2 components, CF(1) - the catalytic core - and CF(0) - the membrane proton channel. CF(1) has five subunits: alpha(3), beta(3), gamma(1), delta(1), epsilon(1). CF(0) has three main subunits: a(1), b(2) and c(9-12). The alpha and beta chains form an alternating ring which encloses part of the gamma chain. CF(1) is attached to CF(0) by a central stalk formed by the gamma and epsilon chains, while a peripheral stalk is formed by the delta and b chains.

Its subcellular location is the cell inner membrane. The enzyme catalyses ATP + H2O + 4 H(+)(in) = ADP + phosphate + 5 H(+)(out). Produces ATP from ADP in the presence of a proton gradient across the membrane. The catalytic sites are hosted primarily by the beta subunits. This Photobacterium profundum (strain SS9) protein is ATP synthase subunit beta 2.